The chain runs to 341 residues: Transcription factor JunD (341 aa).

Residues 21–49 (VAGAAGAPGGGGFAPPGRAFPGAPPTSSM) form a disordered region. A Menin-binding motif (MBM) motif is present at residues 35–47 (PPGRAFPGAPPTS). Positions 51–60 (KKDALTLSLA) match the MAP kinase docking motif; essential for its phosphorylation motif. The disordered stretch occupies residues 65-85 (AGLKPGSATAPSALRPDGAPD). Ser90 is modified (phosphoserine). Ser100 carries the post-translational modification Phosphoserine; by MAPK8. Position 117 is a phosphothreonine (Thr117). The disordered stretch occupies residues 155–176 (AATAATSGAPAPPAPADLAATP). Phosphoserine is present on residues Ser245, Ser249, and Ser253. The segment at 262 to 289 (RIKAERKRLRNRIAASKCRKRKLERISR) is basic motif. In terms of domain architecture, bZIP spans 262–325 (RIKAERKRLR…AQLKQKVLSH (64 aa)). Positions 290-318 (LEEKVKTLKSQNTELASTASLLREQVAQL) are leucine-zipper.

Belongs to the bZIP family. Jun subfamily. As to quaternary structure, heterodimer; binds DNA as a heterodimer. Component of an AP-1 transcription factor complex composed of JUN-FOS heterodimers. As part of the AP-1 transcription factor complex, forms heterodimers with FOS proteins, thereby binding to the AP-1 consensus sequence and stimulating transcription. Forms heterodimers with FOSB; thereby binding to the AP-1 consensus sequence. Interacts (via MBM motif) with MEN1; this interaction represses transcriptional activation. Interacts with MAPK10; this interaction is inhibited in the presence of MEN1. In terms of processing, phosphorylated by MAP kinases MAPK8 and MAPK10; phosphorylation is inhibited in the presence of MEN1.

It is found in the nucleus. In terms of biological role, transcription factor binding AP-1 sites. Heterodimerizes with proteins of the FOS family to form an AP-1 transcription factor complex, thereby enhancing their DNA binding activity to an AP-1 consensus sequence 3'-TGA[GC]TCA-5' and enhancing their transcriptional activity. This Rattus norvegicus (Rat) protein is Transcription factor JunD (Jund).